The chain runs to 89 residues: Large ribosomal subunit protein bL27 (89 aa).

Belongs to the bacterial ribosomal protein bL27 family.

The protein is Large ribosomal subunit protein bL27 of Bacteroides fragilis (strain ATCC 25285 / DSM 2151 / CCUG 4856 / JCM 11019 / LMG 10263 / NCTC 9343 / Onslow / VPI 2553 / EN-2).